The chain runs to 342 residues: Ribosomal RNA small subunit methyltransferase C (342 aa).

This sequence belongs to the methyltransferase superfamily. RsmC family. In terms of assembly, monomer.

The protein resides in the cytoplasm. The catalysed reaction is guanosine(1207) in 16S rRNA + S-adenosyl-L-methionine = N(2)-methylguanosine(1207) in 16S rRNA + S-adenosyl-L-homocysteine + H(+). In terms of biological role, specifically methylates the guanine in position 1207 of 16S rRNA in the 30S particle. This chain is Ribosomal RNA small subunit methyltransferase C, found in Citrobacter koseri (strain ATCC BAA-895 / CDC 4225-83 / SGSC4696).